Here is a 295-residue protein sequence, read N- to C-terminus: Nucleotide-binding protein LSL_1171 (295 aa).

ATP is bound at residue 13–20 (GMSGAGKT). 63-66 (DLRS) is a GTP binding site.

Belongs to the RapZ-like family.

Functionally, displays ATPase and GTPase activities. This is Nucleotide-binding protein LSL_1171 from Ligilactobacillus salivarius (strain UCC118) (Lactobacillus salivarius).